Here is a 795-residue protein sequence, read N- to C-terminus: Phenylalanine--tRNA ligase beta subunit (795 aa).

The tRNA-binding domain occupies 39–148; that stretch reads AGSFHGVVVG…ADAPIGTDIR (110 aa). The B5 domain maps to 401–476; that stretch reads PKRATITLRR…RVYGYNNIPD (76 aa). Asp-454, Asp-460, Glu-463, and Glu-464 together coordinate Mg(2+). Residues 701–794 enclose the FDX-ACB domain; sequence SRFPANRRDI…LKERFQASLR (94 aa).

This sequence belongs to the phenylalanyl-tRNA synthetase beta subunit family. Type 1 subfamily. As to quaternary structure, tetramer of two alpha and two beta subunits. Requires Mg(2+) as cofactor.

The protein resides in the cytoplasm. The enzyme catalyses tRNA(Phe) + L-phenylalanine + ATP = L-phenylalanyl-tRNA(Phe) + AMP + diphosphate + H(+). This is Phenylalanine--tRNA ligase beta subunit from Shigella sonnei (strain Ss046).